The sequence spans 345 residues: UPF0284 protein STK_21430 (345 aa).

The protein belongs to the UPF0284 family.

In Sulfurisphaera tokodaii (strain DSM 16993 / JCM 10545 / NBRC 100140 / 7) (Sulfolobus tokodaii), this protein is UPF0284 protein STK_21430.